A 218-amino-acid polypeptide reads, in one-letter code: Non-structural protein NP-1 (218 aa).

Disordered stretches follow at residues Met-1–Pro-89 and Thr-195–Asn-218. Composition is skewed to basic residues over residues Asp-8–Ser-18 and Pro-27–Ile-40. The segment covering Ser-58–Lys-67 has biased composition (polar residues). Residues Thr-73–Arg-86 are compositionally biased toward basic and acidic residues. The segment covering Glu-196–Met-205 has biased composition (acidic residues).

The protein belongs to the Bocaparvovirus Non-structural protein NP-1 family.

It is found in the host nucleus. Its function is as follows. Required for the expression of the capsid proteins. Performs the splicing and internal polyadenylation of the viral capsid-encoding mRNA precursor, which allows its maturation and expression. Transactivates the viral promoter. The chain is Non-structural protein NP-1 (NP1) from Human bocavirus 3 (HBoV3).